Here is a 130-residue protein sequence, read N- to C-terminus: RutC family protein HI_0719 (130 aa).

The active site involves C109.

Belongs to the RutC family. In terms of assembly, homotrimer.

The sequence is that of RutC family protein HI_0719 from Haemophilus influenzae (strain ATCC 51907 / DSM 11121 / KW20 / Rd).